The following is a 207-amino-acid chain: MANNNLKKLLLSPISDNNPIALQILGICSALAVTTQLQTAFVMAIAVSLVTAFSSMFISMIRNYIPNSIRIIVQMAIIASLVILVDQILRAYVYDLSKQLSVFVGLIITNCIVMGRAEAFAMKSAPLESFVDGIGNGLGYGAMLVIVAFLRELIGSGKIFGVTVLQTIQDGGWYQANGLFLLAPSAFFIIGFVIWAIRTWKPEQVEK.

Transmembrane regions (helical) follow at residues 20–40, 41–61, 69–89, 102–122, 130–150, and 177–197; these read IALQ…LQTA, FVMA…ISMI, IRII…DQIL, VFVG…AFAM, FVDG…VAFL, and NGLF…IWAI.

The protein belongs to the NqrDE/RnfAE family. Composed of six subunits; NqrA, NqrB, NqrC, NqrD, NqrE and NqrF.

It is found in the cell inner membrane. The catalysed reaction is a ubiquinone + n Na(+)(in) + NADH + H(+) = a ubiquinol + n Na(+)(out) + NAD(+). NQR complex catalyzes the reduction of ubiquinone-1 to ubiquinol by two successive reactions, coupled with the transport of Na(+) ions from the cytoplasm to the periplasm. NqrA to NqrE are probably involved in the second step, the conversion of ubisemiquinone to ubiquinol. This Haemophilus ducreyi (strain 35000HP / ATCC 700724) protein is Na(+)-translocating NADH-quinone reductase subunit D.